Here is a 136-residue protein sequence, read N- to C-terminus: MTPVPPSSLRSIAPLSTVFLFTDNVRSNSWFVCKIVYRCLSPRRIISPSICTAFSCWANHGLRLSSTAAMRRSSSSTFLFMASTRMSSSTFVCFIFVFCVSRTAMVFWSFSESTSLLWCIISSSMRLCFSITSGST.

This is an uncharacterized protein from Ictaluridae (bullhead catfishes).